Here is a 1188-residue protein sequence, read N- to C-terminus: Integrin alpha-11 (1188 aa).

Positions Met1–Thr22 are cleaved as a signal peptide. Topologically, residues Phe23–Pro1141 are extracellular. 2 FG-GAP repeats span residues Asn24–Lys85 and Val91–Thr151. Residues Cys76 and Cys83 are joined by a disulfide bond. N-linked (GlcNAc...) asparagine glycans are attached at residues Asn82 and Asn95. 2 cysteine pairs are disulfide-bonded: Cys121–Cys139 and Cys129–Cys159. In terms of domain architecture, VWFA spans Asp164–Leu345. Asn291, Asn331, Asn358, Asn449, and Asn462 each carry an N-linked (GlcNAc...) asparagine glycan. 5 FG-GAP repeats span residues Thr355–His406, Leu411–Asn461, Asn462–Tyr527, Asn528–Lys586, and Gln590–Ser650. The Ca(2+) site is built by Asp488, Asn490, Asp492, and Asp496. N-linked (GlcNAc...) asparagine glycosylation is present at Asn528. Ca(2+) contacts are provided by Asp551, Asn553, Asp555, Asp559, Asp613, Asn615, Asp617, and Asp621. Asn642 carries N-linked (GlcNAc...) asparagine glycosylation. 3 disulfide bridges follow: Cys659-Cys668, Cys674-Cys729, and Cys781-Cys787. A glycan (N-linked (GlcNAc...) asparagine) is linked at Asn694. An N-linked (GlcNAc...) asparagine glycan is attached at Asn857. Cys881 and Cys893 are oxidised to a cystine. Asn894, Asn973, Asn1031, Asn1039, and Asn1059 each carry an N-linked (GlcNAc...) asparagine glycan. Residues Ile1142–Trp1164 traverse the membrane as a helical segment. The Cytoplasmic segment spans residues Lys1165–Lys1188.

It belongs to the integrin alpha chain family. Heterodimer of an alpha and a beta subunit. Alpha-11 associates with beta-1. Interacts with RAB21.

The protein resides in the membrane. In terms of biological role, integrin alpha-11/beta-1 is a receptor for collagen. The protein is Integrin alpha-11 (Itga11) of Mus musculus (Mouse).